A 356-amino-acid chain; its full sequence is Glutamine synthetase cytosolic isozyme 1-1 (356 aa).

The GS beta-grasp domain occupies 19–99 (IIAEYIWIGG…VMCDCYTPAG (81 aa)). The GS catalytic domain maps to 106–356 (KRHNAAKIFS…IAETTIIWKP (251 aa)).

It belongs to the glutamine synthetase family. Homooctamer. Highly expressed in leaf blades, at intermediate levels in spikelets (rice flower) and at lower levels in roots.

It localises to the cytoplasm. The enzyme catalyses L-glutamate + NH4(+) + ATP = L-glutamine + ADP + phosphate + H(+). Its function is as follows. High-affinity glutamine synthetase involved in ammonium assimilation. Seems to be a major component of the cytosolic glutamine synthetic pathway in leaf blades. Plays an important role in maintaining carbon and nitrogen metabolic balance during ammonium assimilation in shoots and roots, thus controlling plant growth and development. Plays an important role in maintaining broad range of metabolites and transcripts involved in the maintenance of plant metabolic homeostasis and development of plastid in roots. The protein is Glutamine synthetase cytosolic isozyme 1-1 of Oryza sativa subsp. japonica (Rice).